The sequence spans 1403 residues: DNA-directed RNA polymerase subunit beta' (1403 aa).

Residues C70, C72, C85, and C88 each contribute to the Zn(2+) site. Residues D460, D462, and D464 each contribute to the Mg(2+) site. Zn(2+) contacts are provided by C814, C888, C895, and C898. The disordered stretch occupies residues 1369–1403 (RRKRRMLEQPESLTADTGTSHYGEDEISESGAATA). The span at 1379 to 1388 (ESLTADTGTS) shows a compositional bias: polar residues.

It belongs to the RNA polymerase beta' chain family. The RNAP catalytic core consists of 2 alpha, 1 beta, 1 beta' and 1 omega subunit. When a sigma factor is associated with the core the holoenzyme is formed, which can initiate transcription. Requires Mg(2+) as cofactor. It depends on Zn(2+) as a cofactor.

It catalyses the reaction RNA(n) + a ribonucleoside 5'-triphosphate = RNA(n+1) + diphosphate. In terms of biological role, DNA-dependent RNA polymerase catalyzes the transcription of DNA into RNA using the four ribonucleoside triphosphates as substrates. This Nitrosococcus oceani (strain ATCC 19707 / BCRC 17464 / JCM 30415 / NCIMB 11848 / C-107) protein is DNA-directed RNA polymerase subunit beta'.